The following is a 452-amino-acid chain: Neuronal acetylcholine receptor subunit alpha-5 (452 aa).

Positions 1–27 are cleaved as a signal peptide; the sequence is MVQLLAGRWRPTGARRGTRGGLPELSS. The Extracellular portion of the chain corresponds to 28–239; sequence AAKHEDSLFR…VIKRLPLFYT (212 aa). N-linked (GlcNAc...) asparagine glycosylation is found at N140, N168, and N214. A disulfide bridge connects residues C155 and C169. An intrachain disulfide couples C219 to C220. A run of 3 helical transmembrane segments spans residues 240–260, 269–289, and 302–322; these read LFLI…FYLP, LCTS…EIIP, and LVFT…AINI. Residues 323-414 lie on the Cytoplasmic side of the membrane; it reads HHRSSSTHNA…KFIAQVLDRM (92 aa). A helical transmembrane segment spans residues 415-435; the sequence is FLWTFLLVSIIGTLGLFVPVI. Residues 436–452 are Extracellular-facing; that stretch reads YKWANIIVPVHIGNTIK.

It belongs to the ligand-gated ion channel (TC 1.A.9) family. Acetylcholine receptor (TC 1.A.9.1) subfamily. Alpha-5/CHRNA5 sub-subfamily. In terms of assembly, neuronal AChR that forms heteropentamers composed of two different type of subunits: alpha and non-alpha (beta). CHRNA5/alpha-5 subunit is only able to form functional nAChRs when co-assembled with another alpha subunit, can be combined to CHRNA4/alpha-4 or CHRNA3/alpha-3 and CHRNB4/beta-4 or CHRNB2/beta-2 to give rise to functional receptors. Interacts with LYPD6.

Its subcellular location is the synaptic cell membrane. It is found in the cell membrane. The enzyme catalyses Ca(2+)(in) = Ca(2+)(out). It carries out the reaction K(+)(in) = K(+)(out). It catalyses the reaction Na(+)(in) = Na(+)(out). With respect to regulation, activated by a myriad of ligands such as acetylcholine, cytisine, nicotine, choline and epibatidine. Component of neuronal acetylcholine receptors (nAChRs) that function as pentameric, ligand-gated cation channels with high calcium permeability among other activities. nAChRs are excitatory neurotrasnmitter receptors formed by a collection of nAChR subunits known to mediate synaptic transmission in the nervous system and the neuromuscular junction. Each nAchR subunit confers differential attributes to channel properties, including activation, deactivation and desensitization kinetics, pH sensitivity, cation permeability, and binding to allosteric modulators. Has an accessory rather than functional role and is only able to form functional nAChRs when co-assembled with another beta subunit. Participates in pentameric assemblies along with CHRNA3, CHRNA4, CHRNB2 and CHRNB4. Increases receptor sensitivity to acetylcholine and nicotine when associated with CHRNA4 and CHRNB2. Plays a role in nicotine addiction. The chain is Neuronal acetylcholine receptor subunit alpha-5 (Chrna5) from Rattus norvegicus (Rat).